Reading from the N-terminus, the 92-residue chain is Small ribosomal subunit protein uS19c (92 aa).

This sequence belongs to the universal ribosomal protein uS19 family.

Its subcellular location is the plastid. It localises to the chloroplast. Protein S19 forms a complex with S13 that binds strongly to the 16S ribosomal RNA. The polypeptide is Small ribosomal subunit protein uS19c (Gracilaria tenuistipitata var. liui (Red alga)).